The following is a 205-amino-acid chain: Dephospho-CoA kinase (205 aa).

Residues 6–205 (RIGLTGGIAA…EIYAGWCAGR (200 aa)) form the DPCK domain. 14–19 (AAGKST) is a binding site for ATP.

The protein belongs to the CoaE family.

Its subcellular location is the cytoplasm. The enzyme catalyses 3'-dephospho-CoA + ATP = ADP + CoA + H(+). Its pathway is cofactor biosynthesis; coenzyme A biosynthesis; CoA from (R)-pantothenate: step 5/5. Functionally, catalyzes the phosphorylation of the 3'-hydroxyl group of dephosphocoenzyme A to form coenzyme A. This Bifidobacterium longum (strain NCC 2705) protein is Dephospho-CoA kinase.